We begin with the raw amino-acid sequence, 609 residues long: UvrABC system protein C (609 aa).

Residues 15-92 (TGSGVYQIQD…IKQFRPRYNV (78 aa)) enclose the GIY-YIG domain. The 36-residue stretch at 202 to 237 (DQVIIKLTERMEVASENLVFEEAAHYRDQIRQLRRL) folds into the UVR domain.

This sequence belongs to the UvrC family. In terms of assembly, interacts with UvrB in an incision complex.

Its subcellular location is the cytoplasm. In terms of biological role, the UvrABC repair system catalyzes the recognition and processing of DNA lesions. UvrC both incises the 5' and 3' sides of the lesion. The N-terminal half is responsible for the 3' incision and the C-terminal half is responsible for the 5' incision. The protein is UvrABC system protein C of Coxiella burnetii (strain Dugway 5J108-111).